Consider the following 240-residue polypeptide: Ribonuclease HII (240 aa).

Residues 31–222 (RLIAGVDEAG…VRRALGLETA (192 aa)) form the RNase H type-2 domain. Aspartate 37, glutamate 38, and aspartate 130 together coordinate a divalent metal cation.

The protein belongs to the RNase HII family. It depends on Mn(2+) as a cofactor. Mg(2+) is required as a cofactor.

It is found in the cytoplasm. It carries out the reaction Endonucleolytic cleavage to 5'-phosphomonoester.. Functionally, endonuclease that specifically degrades the RNA of RNA-DNA hybrids. The polypeptide is Ribonuclease HII (Xanthomonas campestris pv. campestris (strain B100)).